Reading from the N-terminus, the 129-residue chain is Small ribosomal subunit protein uS8 (129 aa).

This sequence belongs to the universal ribosomal protein uS8 family. In terms of assembly, part of the 30S ribosomal subunit.

In terms of biological role, one of the primary rRNA binding proteins, it binds directly to 16S rRNA central domain where it helps coordinate assembly of the platform of the 30S subunit. This is Small ribosomal subunit protein uS8 from Nanoarchaeum equitans (strain Kin4-M).